A 255-amino-acid chain; its full sequence is Hydroxyacylglutathione hydrolase (255 aa).

Zn(2+)-binding residues include His-53, His-55, Asp-57, His-58, His-110, Asp-127, and His-165.

The protein belongs to the metallo-beta-lactamase superfamily. Glyoxalase II family. As to quaternary structure, monomer. It depends on Zn(2+) as a cofactor.

The catalysed reaction is an S-(2-hydroxyacyl)glutathione + H2O = a 2-hydroxy carboxylate + glutathione + H(+). It functions in the pathway secondary metabolite metabolism; methylglyoxal degradation; (R)-lactate from methylglyoxal: step 2/2. Thiolesterase that catalyzes the hydrolysis of S-D-lactoyl-glutathione to form glutathione and D-lactic acid. The protein is Hydroxyacylglutathione hydrolase of Xanthomonas campestris pv. campestris (strain 8004).